Here is a 518-residue protein sequence, read N- to C-terminus: MATTRFPSLLFYSCIFLLCNGSMAQLFGQSFTPWQSSRQGGLRGCKFDRLQAFEPLRQVRSQAGITEYFDEQNEQFRCAGVSVIRRVIEPQGLLLPQYHNAPGLVYILQGRGFTGLTFPGCPATFQQQFQQFDQARFAQGQSKSQNLKDEHQRVHHIKQGDVVALPAGIVHWCYNDGDAPIVAVYVFDVNNNANQLEPRQKEFLLAGNNKREQQFGQNIFSGFSVQLLSEALGISQQAAQKIQSQNDQRGEIIRVSQGLQFLKPFVSQQGPVEHQAYQPIQSQQEQSTQYQVGQSPQYQEGQSTQYQSGQSWDQSFNGLEENFCSLEARQNIENPKRADTYNPRAGRITHLNSKNFPTLNLVQMSATRVNLYQNAILSPYWNINAHSVMHMIQGRARVQVVNNHGQTVFNDILRRGQLLIIPQHYVVLKKAEREGCQYISFKTTPNSMVSYIAGKTSILRALPVDVLANAYRISRQESQNLKNNRGEEFGAFTPKFAQTGSQSYQDEGESSSTEKASE.

The signal sequence occupies residues 1–24 (MATTRFPSLLFYSCIFLLCNGSMA). 2 disulfide bridges follow: Cys-45–Cys-78 and Cys-121–Cys-324. Positions 50–240 (LQAFEPLRQV…ALGISQQAAQ (191 aa)) constitute a Cupin type-1 1 domain. The segment covering 281–295 (QSQQEQSTQYQVGQS) has biased composition (low complexity). Residues 281 to 311 (QSQQEQSTQYQVGQSPQYQEGQSTQYQSGQS) are disordered. A compositionally biased stretch (polar residues) spans 296 to 311 (PQYQEGQSTQYQSGQS). The 150-residue stretch at 330–479 (QNIENPKRAD…AYRISRQESQ (150 aa)) folds into the Cupin type-1 2 domain. A disordered region spans residues 496–518 (FAQTGSQSYQDEGESSSTEKASE).

It belongs to the 11S seed storage protein (globulins) family. In terms of assembly, hexamer; each subunit is composed of an acidic and a basic chain derived from a single precursor and linked by a disulfide bond.

This is a seed storage protein. This Avena sativa (Oat) protein is 12S seed storage globulin 1.